The sequence spans 170 residues: MVNKVKRRVSCFPKATYYKPREIPLCCLEIANISIEELEAIRLCDLLQIEQNEAADRMGISRKTFWSDLQRARQKVADALVNGKAIEISGGEYINTGECRVNFLCKECDHMWEPKFDQNRPTNCPSCGSSLIFRLGGDGRGKRFVENDYCCPKEKGSSRNTSEGSKKKLQ.

This sequence belongs to the UPF0251 family.

This chain is UPF0251 protein MA_1017, found in Methanosarcina acetivorans (strain ATCC 35395 / DSM 2834 / JCM 12185 / C2A).